The following is a 431-amino-acid chain: Enolase (431 aa).

Gln-166 is a binding site for (2R)-2-phosphoglycerate. Glu-208 (proton donor) is an active-site residue. 3 residues coordinate Mg(2+): Asp-245, Glu-288, and Asp-315. Lys-340, Arg-369, Ser-370, and Lys-391 together coordinate (2R)-2-phosphoglycerate. The Proton acceptor role is filled by Lys-340.

It belongs to the enolase family. Requires Mg(2+) as cofactor.

The protein localises to the cytoplasm. The protein resides in the secreted. It localises to the cell surface. It carries out the reaction (2R)-2-phosphoglycerate = phosphoenolpyruvate + H2O. Its pathway is carbohydrate degradation; glycolysis; pyruvate from D-glyceraldehyde 3-phosphate: step 4/5. Its function is as follows. Catalyzes the reversible conversion of 2-phosphoglycerate (2-PG) into phosphoenolpyruvate (PEP). It is essential for the degradation of carbohydrates via glycolysis. This chain is Enolase, found in Clostridium perfringens (strain ATCC 13124 / DSM 756 / JCM 1290 / NCIMB 6125 / NCTC 8237 / Type A).